A 728-amino-acid chain; its full sequence is 1,4-alpha-glucan branching enzyme GlgB (728 aa).

Asp409 functions as the Nucleophile in the catalytic mechanism. Catalysis depends on Glu462, which acts as the Proton donor.

This sequence belongs to the glycosyl hydrolase 13 family. GlgB subfamily. As to quaternary structure, monomer.

The catalysed reaction is Transfers a segment of a (1-&gt;4)-alpha-D-glucan chain to a primary hydroxy group in a similar glucan chain.. It functions in the pathway glycan biosynthesis; glycogen biosynthesis. In terms of biological role, catalyzes the formation of the alpha-1,6-glucosidic linkages in glycogen by scission of a 1,4-alpha-linked oligosaccharide from growing alpha-1,4-glucan chains and the subsequent attachment of the oligosaccharide to the alpha-1,6 position. The protein is 1,4-alpha-glucan branching enzyme GlgB of Cereibacter sphaeroides (strain ATCC 17023 / DSM 158 / JCM 6121 / CCUG 31486 / LMG 2827 / NBRC 12203 / NCIMB 8253 / ATH 2.4.1.) (Rhodobacter sphaeroides).